The chain runs to 107 residues: Small ribosomal subunit protein bS18c (107 aa).

A compositionally biased stretch (basic residues) spans 85-95 (KKAQRFKRRQS). The tract at residues 85–107 (KKAQRFKRRQSTARTVGLRTRNK) is disordered.

This sequence belongs to the bacterial ribosomal protein bS18 family. Part of the 30S ribosomal subunit.

The protein localises to the plastid. It is found in the chloroplast. The polypeptide is Small ribosomal subunit protein bS18c (Oenothera argillicola (Appalachian evening primrose)).